The primary structure comprises 143 residues: Nucleoside diphosphate kinase (143 aa).

Residues K11, F59, R87, T93, R104, and N114 each contribute to the ATP site. H117 (pros-phosphohistidine intermediate) is an active-site residue.

This sequence belongs to the NDK family. As to quaternary structure, homotetramer. Mg(2+) serves as cofactor.

Its subcellular location is the cytoplasm. It catalyses the reaction a 2'-deoxyribonucleoside 5'-diphosphate + ATP = a 2'-deoxyribonucleoside 5'-triphosphate + ADP. The catalysed reaction is a ribonucleoside 5'-diphosphate + ATP = a ribonucleoside 5'-triphosphate + ADP. Major role in the synthesis of nucleoside triphosphates other than ATP. The ATP gamma phosphate is transferred to the NDP beta phosphate via a ping-pong mechanism, using a phosphorylated active-site intermediate. This chain is Nucleoside diphosphate kinase, found in Pseudoalteromonas translucida (strain TAC 125).